Reading from the N-terminus, the 132-residue chain is Probable histone H2A.1 (132 aa).

The segment at 1–22 (MAGRGKTLGSGSAKKATTRSSK) is disordered.

Belongs to the histone H2A family. As to quaternary structure, the nucleosome is a histone octamer containing two molecules each of H2A, H2B, H3 and H4 assembled in one H3-H4 heterotetramer and two H2A-H2B heterodimers. The octamer wraps approximately 147 bp of DNA. In terms of processing, not ubiquitinated. Low level of expression; mainly in roots. Found in the root cap cells and in non dividing tissues of the plant, including the root elongation and maturation zones and the leaf veins.

It localises to the nucleus. It is found in the chromosome. In terms of biological role, core component of nucleosome. Nucleosomes wrap and compact DNA into chromatin, limiting DNA accessibility to the cellular machineries which require DNA as a template. Histones thereby play a central role in transcription regulation, DNA repair, DNA replication and chromosomal stability. DNA accessibility is regulated via a complex set of post-translational modifications of histones, also called histone code, and nucleosome remodeling. The sequence is that of Probable histone H2A.1 from Arabidopsis thaliana (Mouse-ear cress).